Reading from the N-terminus, the 418-residue chain is Tyrosine--tRNA ligase (418 aa).

An L-tyrosine-binding site is contributed by tyrosine 39. A 'HIGH' region motif is present at residues 44-53 (CTADSLHVGS). The L-tyrosine site is built by tyrosine 176 and glutamine 180. Positions 236-240 (KMGKT) match the 'KMSKS' region motif. Residue lysine 239 coordinates ATP. The S4 RNA-binding domain occupies 350–416 (LPLAEMMRAT…KKRHALIRVL (67 aa)).

Belongs to the class-I aminoacyl-tRNA synthetase family. TyrS type 1 subfamily. As to quaternary structure, homodimer.

Its subcellular location is the cytoplasm. The enzyme catalyses tRNA(Tyr) + L-tyrosine + ATP = L-tyrosyl-tRNA(Tyr) + AMP + diphosphate + H(+). Catalyzes the attachment of tyrosine to tRNA(Tyr) in a two-step reaction: tyrosine is first activated by ATP to form Tyr-AMP and then transferred to the acceptor end of tRNA(Tyr). This Rhodospirillum rubrum (strain ATCC 11170 / ATH 1.1.1 / DSM 467 / LMG 4362 / NCIMB 8255 / S1) protein is Tyrosine--tRNA ligase.